The following is a 171-amino-acid chain: Glycine cleavage system H protein 4 (171 aa).

The region spanning 30–112 (FAEVGITDYA…YEAGWIAVIE (83 aa)) is the Lipoyl-binding domain. Lys-71 bears the N6-lipoyllysine mark. The disordered stretch occupies residues 139 to 171 (EKEEEVEVKEEELIETESIEELSEEELGYEENK).

It belongs to the GcvH family. As to quaternary structure, the glycine cleavage system is composed of four proteins: P, T, L and H. It depends on (R)-lipoate as a cofactor.

Functionally, the glycine cleavage system catalyzes the degradation of glycine. The H protein shuttles the methylamine group of glycine from the P protein to the T protein. This chain is Glycine cleavage system H protein 4, found in Aquifex aeolicus (strain VF5).